We begin with the raw amino-acid sequence, 323 residues long: MIEFGNFYQLIAKNHLSHWLETLPAQIAAWQREQQHGLFKQWSNAVEFLPEITPWRLDLLHSVTAESETPLSEGQLKRIDTLLRNLMPWRKGPFSLYGVDIDTEWRSDWKWDRVLPHLSDLTGRTILDVGCGSGYHLWRMIGAGAHLAVGIDPTQLFLCQFEAVRKLLGNDQRAHLLPLGIEQLPALKAFDTVFSMGVLYHRRSPLEHLWQLKDQLVNEGELVLETLVVDGDENTVLVPGDRYAQMRNVYFIPSAPALKKWLEKCGFVDVRIADVCVTTTEEQRRTEWMVTESLADFLDPNDRSKTVEGYPAPQRAVLIARKP.

Residues K91, W105, K110, G130, 152 to 154 (DPT), 181 to 182 (IE), M196, Y200, and R315 contribute to the carboxy-S-adenosyl-L-methionine site.

The protein belongs to the class I-like SAM-binding methyltransferase superfamily. CmoB family. Homotetramer.

It catalyses the reaction carboxy-S-adenosyl-L-methionine + 5-hydroxyuridine(34) in tRNA = 5-carboxymethoxyuridine(34) in tRNA + S-adenosyl-L-homocysteine + H(+). In terms of biological role, catalyzes carboxymethyl transfer from carboxy-S-adenosyl-L-methionine (Cx-SAM) to 5-hydroxyuridine (ho5U) to form 5-carboxymethoxyuridine (cmo5U) at position 34 in tRNAs. In Salmonella typhi, this protein is tRNA U34 carboxymethyltransferase.